A 423-amino-acid chain; its full sequence is Histidine--tRNA ligase (423 aa).

This sequence belongs to the class-II aminoacyl-tRNA synthetase family. In terms of assembly, homodimer.

It is found in the cytoplasm. The enzyme catalyses tRNA(His) + L-histidine + ATP = L-histidyl-tRNA(His) + AMP + diphosphate + H(+). The protein is Histidine--tRNA ligase of Haemophilus ducreyi (strain 35000HP / ATCC 700724).